The primary structure comprises 793 residues: Kinesin-like protein KIF3C (793 aa).

The region spanning 10–365 (ALKVVARCRP…LRFANRAKNI (356 aa)) is the Kinesin motor domain. ATP is bound at residue 97 to 104 (GQTGTGKT). 3 disordered regions span residues 251 to 288 (ERQN…ERPK), 395 to 423 (EKRG…GYPE), and 756 to 793 (KVRK…ADHE). Residues 270-284 (GGSGGGGGSGGGAGG) are compositionally biased toward gly residues. Residues 376–630 (KDTLLREFQE…QNEQTRELKL (255 aa)) are a coiled coil. Residues 399–413 (MLGKRPRRKSSRGKK) show a composition bias toward basic residues. The interval 631-793 (KYLIIENFIP…LRPATVADHE (163 aa)) is globular.

The protein belongs to the TRAFAC class myosin-kinesin ATPase superfamily. Kinesin family. Kinesin II subfamily. As to quaternary structure, heterodimer of KIF3A and KIF3C.

It localises to the cytoplasm. It is found in the cytoskeleton. In terms of biological role, microtubule-based anterograde translocator for membranous organelles. This Pongo abelii (Sumatran orangutan) protein is Kinesin-like protein KIF3C (KIF3C).